We begin with the raw amino-acid sequence, 317 residues long: COP9 signalosome complex subunit 6b (317 aa).

The region spanning 11–164 is the MPN domain; the sequence is FKLHPLVMLN…VTIYESEFHV (154 aa).

The protein belongs to the peptidase M67A family. CSN6 subfamily. In terms of assembly, component of the CSN complex, probably composed of CSN1, CSN2, CSN3, CSN4, CSN5 (CSN5A or CSN5B), CSN6 (CSN6A or CSN6B), CSN7 and CSN8. Interacts with itself. In the complex, it probably interacts directly with CSN4, CSN5A or CSN5B, and CSN7. Binds to the translation initiation factors TIF3E1.

Its subcellular location is the cytoplasm. It is found in the nucleus. Functionally, component of the COP9 signalosome complex (CSN), a complex involved in various cellular and developmental processes such as photomorphogenesis and auxin and jasmonate responses. The CSN complex is an essential regulator of the ubiquitin (Ubl) conjugation pathway by mediating the deneddylation of the cullin subunits of SCF-type E3 ligase complexes, leading to decrease the Ubl ligase activity of SCF. It is involved in repression of photomorphogenesis in darkness by regulating the activity of COP1-containing Ubl ligase complexes. The complex is also required for degradation of PSIAA6 by regulating the activity of the Ubl ligase SCF-TIR complex. Essential for the structural integrity of the CSN holocomplex. In Arabidopsis thaliana (Mouse-ear cress), this protein is COP9 signalosome complex subunit 6b.